We begin with the raw amino-acid sequence, 366 residues long: Transcription factor MYB28 (366 aa).

2 consecutive HTH myb-type domains span residues 9–61 and 62–116; these read GEGL…TNYL and KPEI…KKRL. DNA-binding regions (H-T-H motif) lie at residues 37-61 and 89-112; these read WRDI…TNYL and WSVI…NTHL. A disordered region spans residues 124-170; the sequence is VTHKPLASSSNPTVDENLNSPNASSSDKQYSRSSSMPFLSRPPPSSC. Positions 130 to 146 are enriched in polar residues; sequence ASSSNPTVDENLNSPNA. Positions 147 to 158 are enriched in low complexity; that stretch reads SSSDKQYSRSSS.

In terms of assembly, can form complexes with MYC2, MYC3 or MYC4. Expressed in generative organs, mature leaves and trichomes.

The protein resides in the nucleus. Major regulator of short-chained aliphatic glucosinolates (GLSs) biosynthesis. Together with MYB29/HAG3 and MYB76/HAG2, promotes aliphatic glucosinolate biosynthesis but represses indolic glucosinolate biosynthesis. Prevents insect performance (e.g. lepidopteran insect Mamestra brassicae and Spodoptera exigua) by promoting glucosinolates. In Arabidopsis thaliana (Mouse-ear cress), this protein is Transcription factor MYB28 (MYB28).